The chain runs to 578 residues: Phosphatase DCR2 (578 aa).

Position 116–123 (116–123) interacts with ATP; sequence GRRWFGKS.

It is found in the cytoplasm. Required for cell cycle progression. Has a role in the completion of START. This Saccharomyces cerevisiae (strain ATCC 204508 / S288c) (Baker's yeast) protein is Phosphatase DCR2 (DCR2).